The following is a 94-amino-acid chain: Aspartyl/glutamyl-tRNA(Asn/Gln) amidotransferase subunit C (94 aa).

This sequence belongs to the GatC family. In terms of assembly, heterotrimer of A, B and C subunits.

It carries out the reaction L-glutamyl-tRNA(Gln) + L-glutamine + ATP + H2O = L-glutaminyl-tRNA(Gln) + L-glutamate + ADP + phosphate + H(+). The catalysed reaction is L-aspartyl-tRNA(Asn) + L-glutamine + ATP + H2O = L-asparaginyl-tRNA(Asn) + L-glutamate + ADP + phosphate + 2 H(+). Allows the formation of correctly charged Asn-tRNA(Asn) or Gln-tRNA(Gln) through the transamidation of misacylated Asp-tRNA(Asn) or Glu-tRNA(Gln) in organisms which lack either or both of asparaginyl-tRNA or glutaminyl-tRNA synthetases. The reaction takes place in the presence of glutamine and ATP through an activated phospho-Asp-tRNA(Asn) or phospho-Glu-tRNA(Gln). The protein is Aspartyl/glutamyl-tRNA(Asn/Gln) amidotransferase subunit C of Campylobacter jejuni subsp. jejuni serotype O:6 (strain 81116 / NCTC 11828).